The chain runs to 485 residues: Glucose-6-phosphate 1-dehydrogenase (485 aa).

Residues Arg46, 89 to 90 (DI), and Lys144 contribute to the NADP(+) site. Positions 174, 178, 212, and 231 each coordinate substrate. The active-site Proton acceptor is the His236. Lys334 serves as a coordination point for substrate.

This sequence belongs to the glucose-6-phosphate dehydrogenase family.

It carries out the reaction D-glucose 6-phosphate + NADP(+) = 6-phospho-D-glucono-1,5-lactone + NADPH + H(+). It functions in the pathway carbohydrate degradation; pentose phosphate pathway; D-ribulose 5-phosphate from D-glucose 6-phosphate (oxidative stage): step 1/3. Its function is as follows. Catalyzes the oxidation of glucose 6-phosphate to 6-phosphogluconolactone. The chain is Glucose-6-phosphate 1-dehydrogenase from Zymomonas mobilis subsp. mobilis (strain ATCC 31821 / ZM4 / CP4).